A 267-amino-acid chain; its full sequence is Elsinochrome reductase 1 (267 aa).

NADP(+)-binding residues include Ile26, Asp72, Asn99, and Arg132. Catalysis depends on Ser149, which acts as the Proton donor. 4 residues coordinate NADP(+): Tyr163, Lys167, Ile196, and Thr198. Tyr163 (proton acceptor) is an active-site residue. Lys167 serves as the catalytic Lowers pKa of active site Tyr.

This sequence belongs to the short-chain dehydrogenases/reductases (SDR) family.

Reductase; part of the gene cluster that mediates the biosynthesis of elsinochromes, pigments consisting of at least four interconvertible tautomers (A, B, C and D) that have a core phenolic quinone to which various side chains are attached and which play an important role in fungal pathogenesis. The non-reducing polyketide synthase PKS1 was proposed to iteratively catalyze decarboxylation between acetyl-CoA and malonyl-CoA subunits for polyketide chain elongation. The released polyketide undergoes cyclization to form an aromatic ring, and proceeds via serial modification steps to produce the heptaketide back- bone of elsinochrome. As elsinochrome has a symmetrical structure, two identical heptaketides are fused to form a core 1,2-dihydrobenzo-perylene ring structure, which can then be successively modified to produce the various derivatives of elsinochrome. Some of these reactions may be cooperatively carried out, at least in part, by the products of RDT1, OXR1 and PKS1. PRF1, embedded within the elsinochrome cluster possibly functions to stabilize some of the biosynthetic enzymes required for elsinochrome production. As prefoldin is a hexamer containing 2 a and 4 b subunits, additional prefoldin subunits, whose coding genes may not immediately link to the elsinochrome biosynthetic gene cluster, are required to fulfill the chaperone function. In addition, no methyltransferase-coding gene exists within the biosynthetic gene cluster, even though elsinochrome has four methyl groups at positions C3, C7, C8 and C12. Apparently, the identified gene cluster does not contain the entire entourage of genes responsible for elsinochrome biosynthesis. Once elsinochrome is synthesized, it must be exported outside the fungal cells, which is probably accomplished by the ECT1 transporter, to avoid toxicity. The protein is Elsinochrome reductase 1 of Elsinoe fawcettii (Citrus scab fungus).